A 288-amino-acid chain; its full sequence is Phosphatidylserine decarboxylase proenzyme (288 aa).

Residues Asp90, His147, and Ser254 each act as charge relay system; for autoendoproteolytic cleavage activity in the active site. Ser254 (schiff-base intermediate with substrate; via pyruvic acid; for decarboxylase activity) is an active-site residue. Ser254 carries the pyruvic acid (Ser); by autocatalysis modification.

It belongs to the phosphatidylserine decarboxylase family. PSD-B subfamily. Prokaryotic type I sub-subfamily. In terms of assembly, heterodimer of a large membrane-associated beta subunit and a small pyruvoyl-containing alpha subunit. Pyruvate is required as a cofactor. Post-translationally, is synthesized initially as an inactive proenzyme. Formation of the active enzyme involves a self-maturation process in which the active site pyruvoyl group is generated from an internal serine residue via an autocatalytic post-translational modification. Two non-identical subunits are generated from the proenzyme in this reaction, and the pyruvate is formed at the N-terminus of the alpha chain, which is derived from the carboxyl end of the proenzyme. The autoendoproteolytic cleavage occurs by a canonical serine protease mechanism, in which the side chain hydroxyl group of the serine supplies its oxygen atom to form the C-terminus of the beta chain, while the remainder of the serine residue undergoes an oxidative deamination to produce ammonia and the pyruvoyl prosthetic group on the alpha chain. During this reaction, the Ser that is part of the protease active site of the proenzyme becomes the pyruvoyl prosthetic group, which constitutes an essential element of the active site of the mature decarboxylase.

The protein localises to the cell membrane. The enzyme catalyses a 1,2-diacyl-sn-glycero-3-phospho-L-serine + H(+) = a 1,2-diacyl-sn-glycero-3-phosphoethanolamine + CO2. Its pathway is phospholipid metabolism; phosphatidylethanolamine biosynthesis; phosphatidylethanolamine from CDP-diacylglycerol: step 2/2. In terms of biological role, catalyzes the formation of phosphatidylethanolamine (PtdEtn) from phosphatidylserine (PtdSer). This is Phosphatidylserine decarboxylase proenzyme from Hamiltonella defensa subsp. Acyrthosiphon pisum (strain 5AT).